We begin with the raw amino-acid sequence, 379 residues long: Carbamoyl phosphate synthase small chain (379 aa).

The segment at 1 to 188 (MSTPAILALA…ELGKGFTQPE (188 aa)) is CPSase. The L-glutamine site is built by serine 47, glycine 240, and glycine 242. One can recognise a Glutamine amidotransferase type-1 domain in the interval 192–379 (HVVAYDYGVK…FIELIEAAKK (188 aa)). The Nucleophile role is filled by cysteine 269. 5 residues coordinate L-glutamine: leucine 270, glutamine 273, asparagine 311, glycine 313, and phenylalanine 314. Active-site residues include histidine 353 and glutamate 355.

The protein belongs to the CarA family. In terms of assembly, composed of two chains; the small (or glutamine) chain promotes the hydrolysis of glutamine to ammonia, which is used by the large (or ammonia) chain to synthesize carbamoyl phosphate. Tetramer of heterodimers (alpha,beta)4.

The catalysed reaction is hydrogencarbonate + L-glutamine + 2 ATP + H2O = carbamoyl phosphate + L-glutamate + 2 ADP + phosphate + 2 H(+). It catalyses the reaction L-glutamine + H2O = L-glutamate + NH4(+). The protein operates within amino-acid biosynthesis; L-arginine biosynthesis; carbamoyl phosphate from bicarbonate: step 1/1. Its pathway is pyrimidine metabolism; UMP biosynthesis via de novo pathway; (S)-dihydroorotate from bicarbonate: step 1/3. Small subunit of the glutamine-dependent carbamoyl phosphate synthetase (CPSase). CPSase catalyzes the formation of carbamoyl phosphate from the ammonia moiety of glutamine, carbonate, and phosphate donated by ATP, constituting the first step of 2 biosynthetic pathways, one leading to arginine and/or urea and the other to pyrimidine nucleotides. The small subunit (glutamine amidotransferase) binds and cleaves glutamine to supply the large subunit with the substrate ammonia. The chain is Carbamoyl phosphate synthase small chain from Acinetobacter baylyi (strain ATCC 33305 / BD413 / ADP1).